The primary structure comprises 577 residues: Proline--tRNA ligase (577 aa).

Belongs to the class-II aminoacyl-tRNA synthetase family. ProS type 1 subfamily. In terms of assembly, homodimer.

It localises to the cytoplasm. It catalyses the reaction tRNA(Pro) + L-proline + ATP = L-prolyl-tRNA(Pro) + AMP + diphosphate. In terms of biological role, catalyzes the attachment of proline to tRNA(Pro) in a two-step reaction: proline is first activated by ATP to form Pro-AMP and then transferred to the acceptor end of tRNA(Pro). As ProRS can inadvertently accommodate and process non-cognate amino acids such as alanine and cysteine, to avoid such errors it has two additional distinct editing activities against alanine. One activity is designated as 'pretransfer' editing and involves the tRNA(Pro)-independent hydrolysis of activated Ala-AMP. The other activity is designated 'posttransfer' editing and involves deacylation of mischarged Ala-tRNA(Pro). The misacylated Cys-tRNA(Pro) is not edited by ProRS. This chain is Proline--tRNA ligase, found in Thermotoga neapolitana (strain ATCC 49049 / DSM 4359 / NBRC 107923 / NS-E).